Consider the following 760-residue polypeptide: Probable ATP-dependent RNA helicase DDX27 (760 aa).

The segment at 1–50 (MLAELGFIRTIGENDEVPVEPESDSGDEEEEGPIVLGRKQKALQKNRSAD) is disordered. Residues 13–32 (ENDEVPVEPESDSGDEEEEG) show a composition bias toward acidic residues. Serine 23, serine 25, and serine 48 each carry phosphoserine. The short motif at 55–57 (FVF) is the Required for interaction with the PEBOW complex element. The segment at 80–149 (KRAATTLDEK…TDYSSEDEEI (70 aa)) is disordered. A compositionally biased stretch (basic and acidic residues) spans 98–122 (KAEDKEAKSGKVEEKEGQADSDLKG). Over residues 126 to 148 (PGEDEAGSKDEDSETDYSSEDEE) the composition is skewed to acidic residues. A phosphoserine mark is found at serine 133 and serine 144. Residues 157–166 (KVKEKKKKKK) carry the Nuclear localization signal motif. Residues 184-212 (LSFQDMNLSRPLLKAITAMGFKQPTPIQK) carry the Q motif motif. One can recognise a Helicase ATP-binding domain in the interval 215–389 (IPVGLLGKDI…SVSLKNPVRI (175 aa)). 228-235 (AATGTGKT) lines the ATP pocket. Residues 337-340 (DEAD) carry the DEAD box motif. The region spanning 419 to 569 (IVAALLMRTF…DVILKFRDKI (151 aa)) is the Helicase C-terminal domain. Disordered regions lie at residues 605 to 624 (KGKE…TKEE) and 679 to 760 (RLAK…KRKK). Composition is skewed to basic residues over residues 682–691 (KRNRRTKRAR) and 744–760 (RQRR…KRKK).

The protein belongs to the DEAD box helicase family. DDX27/DRS1 subfamily. Associates with PeBoW complex, composed of BOP1, PES1 and WDR12. Interacts directly with BOP1 and PES1.

Its subcellular location is the nucleus. It localises to the nucleolus. The protein localises to the chromosome. It carries out the reaction ATP + H2O = ADP + phosphate + H(+). Probable ATP-dependent RNA helicase. Component of the nucleolar ribosomal RNA (rRNA) processing machinery that regulates 3' end formation of ribosomal 47S rRNA. The sequence is that of Probable ATP-dependent RNA helicase DDX27 (Ddx27) from Mus musculus (Mouse).